Here is a 340-residue protein sequence, read N- to C-terminus: Zinc finger protein 488 (340 aa).

Positions 72-187 (AELALLVAPG…SVFPAGESAD (116 aa)) are important for transcriptional repression activity. The interval 77 to 180 (LVAPGKPRPG…AERPELTSVF (104 aa)) is disordered. Residues 82–91 (KPRPGKPLPP) show a composition bias toward pro residues. Positions 106 to 125 (PRMKDRQVDAQAQEREHDDP) are enriched in basic and acidic residues. 2 C2H2-type zinc fingers span residues 275-302 (NWCA…KKEH) and 317-339 (LACP…MTSH). The short motif at 298 to 305 (HKKEHAGP) is the Nuclear localization signal element.

The protein belongs to the krueppel C2H2-type zinc-finger protein family. Interacts with OLIG2.

The protein localises to the nucleus. In terms of biological role, transcriptional repressor. Plays a role in oligodendrocyte differentiation, together with OLIG2. Mediates Notch signaling-activated formation of oligodendrocyte precursors. Promotes differentiation of adult neural stem progenitor cells (NSPCs) into mature oligodendrocytes and contributes to remyelination following nerve injury. The protein is Zinc finger protein 488 (ZNF488) of Homo sapiens (Human).